We begin with the raw amino-acid sequence, 254 residues long: 4-hydroxy-tetrahydrodipicolinate reductase (254 aa).

13–18 (GAAGRM) provides a ligand contact to NAD(+). Arg-39 provides a ligand contact to NADP(+). NAD(+)-binding positions include 86 to 88 (GTT) and 110 to 113 (AANT). His-143 functions as the Proton donor/acceptor in the catalytic mechanism. Residue His-144 coordinates (S)-2,3,4,5-tetrahydrodipicolinate. Lys-147 serves as the catalytic Proton donor. 153 to 154 (GT) contributes to the (S)-2,3,4,5-tetrahydrodipicolinate binding site.

The protein belongs to the DapB family.

Its subcellular location is the cytoplasm. It carries out the reaction (S)-2,3,4,5-tetrahydrodipicolinate + NAD(+) + H2O = (2S,4S)-4-hydroxy-2,3,4,5-tetrahydrodipicolinate + NADH + H(+). It catalyses the reaction (S)-2,3,4,5-tetrahydrodipicolinate + NADP(+) + H2O = (2S,4S)-4-hydroxy-2,3,4,5-tetrahydrodipicolinate + NADPH + H(+). It functions in the pathway amino-acid biosynthesis; L-lysine biosynthesis via DAP pathway; (S)-tetrahydrodipicolinate from L-aspartate: step 4/4. In terms of biological role, catalyzes the conversion of 4-hydroxy-tetrahydrodipicolinate (HTPA) to tetrahydrodipicolinate. This chain is 4-hydroxy-tetrahydrodipicolinate reductase, found in Zymomonas mobilis subsp. mobilis (strain ATCC 31821 / ZM4 / CP4).